We begin with the raw amino-acid sequence, 271 residues long: Probable WRKY transcription factor 69 (271 aa).

Disordered regions lie at residues 1–47 and 130–166; these read MHRR…NVEK and PSSSANTKSHHRSSVVLKTAKKEEEYEEEEEELTVTA. Over residues 9-18 the composition is skewed to acidic residues; that stretch reads ESDDEEDETY. The WRKY DNA-binding region spans 64 to 130; sequence GEVYPPSDSW…YACDHNHPFP (67 aa).

This sequence belongs to the WRKY group II-e family.

Its subcellular location is the nucleus. In terms of biological role, transcription factor. Interacts specifically with the W box (5'-(T)TGAC[CT]-3'), a frequently occurring elicitor-responsive cis-acting element. The protein is Probable WRKY transcription factor 69 (WRKY69) of Arabidopsis thaliana (Mouse-ear cress).